The sequence spans 428 residues: Isocitrate dehydrogenase [NADP], mitochondrial (428 aa).

Residues 1–16 constitute a mitochondrion transit peptide; it reads MSMLSRRLFSTSRLAA. NADP(+) is bound by residues 91–93 and Arg98; that span reads TIT. Thr93 is a binding site for substrate. Residues 110-116, Arg125, and Arg148 contribute to the substrate site; that span reads SPNGTIR. Position 269 (Asp269) interacts with Mn(2+). NADP(+) is bound at residue Lys277. Residue Asp292 coordinates Mn(2+). Residues 327-332 and Asn345 contribute to the NADP(+) site; that span reads GTVTRH.

The protein belongs to the isocitrate and isopropylmalate dehydrogenases family. As to quaternary structure, homodimer. It depends on Mg(2+) as a cofactor. Requires Mn(2+) as cofactor.

It is found in the mitochondrion. It catalyses the reaction D-threo-isocitrate + NADP(+) = 2-oxoglutarate + CO2 + NADPH. Its activity is regulated as follows. The enzyme is subject to end product inhibition by NADPH and 2-oxoglutarate. In terms of biological role, mitochondrial IDP1 may regulate flux through the tricarboxylic acid cycle and respiration. Its probably critical function is the production of NADPH. The sequence is that of Isocitrate dehydrogenase [NADP], mitochondrial (IDP1) from Saccharomyces cerevisiae (strain ATCC 204508 / S288c) (Baker's yeast).